The chain runs to 500 residues: Squalene epoxidase ERG1 (500 aa).

The chain crosses the membrane as a helical span at residues 20-40 (EADVVVVGAGVFGCTMAFALA). Residues 30–31 (VF), 50–51 (ER), Arg58, Arg145, Asp332, and Met345 contribute to the FAD site. Transmembrane regions (helical) follow at residues 450–470 (AFLAIWLNACSVVGCGILGIF) and 474–494 (LAIIDAVLILWKACIVFIPIM).

It belongs to the squalene monooxygenase family. Requires FAD as cofactor.

The protein resides in the microsome membrane. The protein localises to the endoplasmic reticulum membrane. It is found in the lipid droplet. It catalyses the reaction squalene + reduced [NADPH--hemoprotein reductase] + O2 = (S)-2,3-epoxysqualene + oxidized [NADPH--hemoprotein reductase] + H2O + H(+). It functions in the pathway terpene metabolism; lanosterol biosynthesis; lanosterol from farnesyl diphosphate: step 2/3. Its pathway is steroid metabolism; ergosterol biosynthesis. Its function is as follows. Squalene epoxidase; part of the third module of ergosterol biosynthesis pathway that includes the late steps of the pathway. ERG1 catalyzes the epoxidation of squalene into 2,3-epoxysqualene. The third module or late pathway involves the ergosterol synthesis itself through consecutive reactions that mainly occur in the endoplasmic reticulum (ER) membrane. Firstly, the squalene synthase ERG9 catalyzes the condensation of 2 farnesyl pyrophosphate moieties to form squalene, which is the precursor of all steroids. Squalene synthase is crucial for balancing the incorporation of farnesyl diphosphate (FPP) into sterol and nonsterol isoprene synthesis. Secondly, squalene is converted into lanosterol by the consecutive action of the squalene epoxidase ERG1 and the lanosterol synthase ERG7. Then, the delta(24)-sterol C-methyltransferase ERG6 methylates lanosterol at C-24 to produce eburicol. Eburicol is the substrate of the sterol 14-alpha demethylase encoded by CYP51A, CYP51B and CYP51C, to yield 4,4,24-trimethyl ergosta-8,14,24(28)-trienol. CYP51B encodes the enzyme primarily responsible for sterol 14-alpha-demethylation, and plays an essential role in ascospore formation. CYP51A encodes an additional sterol 14-alpha-demethylase, induced on ergosterol depletion and responsible for the intrinsic variation in azole sensitivity. The third CYP51 isoform, CYP51C, does not encode a sterol 14-alpha-demethylase, but is required for full virulence on host wheat ears. The C-14 reductase ERG24 then reduces the C14=C15 double bond which leads to 4,4-dimethylfecosterol. A sequence of further demethylations at C-4, involving the C-4 demethylation complex containing the C-4 methylsterol oxidases ERG25, the sterol-4-alpha-carboxylate 3-dehydrogenase ERG26 and the 3-keto-steroid reductase ERG27, leads to the production of fecosterol via 4-methylfecosterol. ERG28 has a role as a scaffold to help anchor ERG25, ERG26 and ERG27 to the endoplasmic reticulum. The C-8 sterol isomerase ERG2 then catalyzes the reaction which results in unsaturation at C-7 in the B ring of sterols and thus converts fecosterol to episterol. The sterol-C5-desaturases ERG3A and ERG3BB then catalyze the introduction of a C-5 double bond in the B ring to produce 5-dehydroepisterol. The C-22 sterol desaturases ERG5A and ERG5B further convert 5-dehydroepisterol into ergosta-5,7,22,24(28)-tetraen-3beta-ol by forming the C-22(23) double bond in the sterol side chain. Finally, ergosta-5,7,22,24(28)-tetraen-3beta-ol is substrate of the C-24(28) sterol reductase ERG4 to produce ergosterol. The protein is Squalene epoxidase ERG1 of Gibberella zeae (strain ATCC MYA-4620 / CBS 123657 / FGSC 9075 / NRRL 31084 / PH-1) (Wheat head blight fungus).